The primary structure comprises 319 residues: Ribonuclease Z (319 aa).

The Zn(2+) site is built by histidine 62, histidine 64, aspartate 66, histidine 67, histidine 145, aspartate 216, and histidine 274. Aspartate 66 acts as the Proton acceptor in catalysis.

Belongs to the RNase Z family. In terms of assembly, homodimer. Zn(2+) serves as cofactor.

The catalysed reaction is Endonucleolytic cleavage of RNA, removing extra 3' nucleotides from tRNA precursor, generating 3' termini of tRNAs. A 3'-hydroxy group is left at the tRNA terminus and a 5'-phosphoryl group is left at the trailer molecule.. Functionally, zinc phosphodiesterase, which displays some tRNA 3'-processing endonuclease activity. Probably involved in tRNA maturation, by removing a 3'-trailer from precursor tRNA. This Synechococcus sp. (strain CC9902) protein is Ribonuclease Z.